The primary structure comprises 467 residues: Coiled-coil domain-containing protein 174 (467 aa).

Disordered regions lie at residues 47–76 (INKK…LEEQ) and 129–163 (GATR…SEEW). The span at 64-76 (RAEKDAEQKLEEQ) shows a compositional bias: basic and acidic residues. Positions 64–99 (RAEKDAEQKLEEQKTLDKAREKLEEKAKLYEKMTKG) form a coiled coil. Residues 136 to 147 (IEEERDDDDKEE) show a composition bias toward acidic residues. The residue at position 198 (serine 198) is a Phosphoserine. Residues 268 to 310 (LEMLREQTTDQRIKRENIKEKRKAMLEARLAKLRQKKMKKSKE) adopt a coiled-coil conformation. 2 disordered regions span residues 301–365 (RQKK…IREW) and 379–454 (KQSE…VTFQ). Composition is skewed to basic and acidic residues over residues 349–365 (IQER…IREW) and 379–390 (KQSELRAERDPE). Residues 406–415 (PMSSQPQSRP) show a composition bias toward polar residues. The span at 423-446 (GHSSGQSQEPSSSHTSTPASESSP) shows a compositional bias: low complexity.

The protein resides in the nucleus. Functionally, probably involved in neuronal development. The chain is Coiled-coil domain-containing protein 174 (Ccdc174) from Mus musculus (Mouse).